The sequence spans 615 residues: UvrABC system protein C (615 aa).

Positions 12–91 constitute a GIY-YIG domain; it reads EKPGVYIMKD…IKKYKPKYNV (80 aa). In terms of domain architecture, UVR spans 203 to 238; it reads DWLIQKLKEDMKKAAEELRFEEAARIRDQIFAIERT.

Belongs to the UvrC family. Interacts with UvrB in an incision complex.

It is found in the cytoplasm. Its function is as follows. The UvrABC repair system catalyzes the recognition and processing of DNA lesions. UvrC both incises the 5' and 3' sides of the lesion. The N-terminal half is responsible for the 3' incision and the C-terminal half is responsible for the 5' incision. In Thermoanaerobacter sp. (strain X514), this protein is UvrABC system protein C.